A 128-amino-acid polypeptide reads, in one-letter code: uncharacterized protein (128 aa).

It belongs to the HesB/IscA family.

This is an uncharacterized protein from Buchnera aphidicola subsp. Baizongia pistaciae (strain Bp).